Here is an 89-residue protein sequence, read N- to C-terminus: Small ribosomal subunit protein uS19 (89 aa).

This sequence belongs to the universal ribosomal protein uS19 family.

Protein S19 forms a complex with S13 that binds strongly to the 16S ribosomal RNA. The chain is Small ribosomal subunit protein uS19 from Vesicomyosocius okutanii subsp. Calyptogena okutanii (strain HA).